Reading from the N-terminus, the 302-residue chain is 4-diphosphocytidyl-2-C-methyl-D-erythritol kinase (302 aa).

Lys-27 is a catalytic residue. Residue 110 to 120 (PMGGGVGGGSS) participates in ATP binding. Asp-152 is a catalytic residue.

Belongs to the GHMP kinase family. IspE subfamily.

It catalyses the reaction 4-CDP-2-C-methyl-D-erythritol + ATP = 4-CDP-2-C-methyl-D-erythritol 2-phosphate + ADP + H(+). Its pathway is isoprenoid biosynthesis; isopentenyl diphosphate biosynthesis via DXP pathway; isopentenyl diphosphate from 1-deoxy-D-xylulose 5-phosphate: step 3/6. Its function is as follows. Catalyzes the phosphorylation of the position 2 hydroxy group of 4-diphosphocytidyl-2C-methyl-D-erythritol. The polypeptide is 4-diphosphocytidyl-2-C-methyl-D-erythritol kinase (Mannheimia succiniciproducens (strain KCTC 0769BP / MBEL55E)).